The sequence spans 130 residues: Secreted RxLR effector protein 66 (130 aa).

Residues 1-21 (MHLRLLMSTVITATLIVSNNA) form the signal peptide. The RxLR-dEER motif lies at 32–62 (RALRGASTVGIAADNLLAAHFSPTLKHKESR). A helical membrane pass occupies residues 104–124 (GPAIAIFAGVAATFILIDYLI).

Belongs to the RxLR effector family.

The protein localises to the secreted. It localises to the host cytoplasm. Its subcellular location is the host nucleus. The protein resides in the membrane. Functionally, effector that acts as a broad suppressor of cell death to interrupt plant immunity. Inhibits cell death induced by cell death-inducing proteins, including the PAMP elicitor INF1 from P.infestans. In Plasmopara viticola (Downy mildew of grapevine), this protein is Secreted RxLR effector protein 66.